Consider the following 54-residue polypeptide: ATP synthase F(0) complex subunit 8 (54 aa).

The chain crosses the membrane as a helical span at residues 9-25 (WVFLFFLVWLVLGFLGL).

Belongs to the ATPase protein 8 family. As to quaternary structure, component of the ATP synthase complex composed at least of ATP5F1A/subunit alpha, ATP5F1B/subunit beta, ATP5MC1/subunit c (homooctomer), MT-ATP6/subunit a, MT-ATP8/subunit 8, ATP5ME/subunit e, ATP5MF/subunit f, ATP5MG/subunit g, ATP5MK/subunit k, ATP5MJ/subunit j, ATP5F1C/subunit gamma, ATP5F1D/subunit delta, ATP5F1E/subunit epsilon, ATP5PF/subunit F6, ATP5PB/subunit b, ATP5PD/subunit d, ATP5PO/subunit OSCP. ATP synthase complex consists of a soluble F(1) head domain (subunits alpha(3) and beta(3)) - the catalytic core - and a membrane F(0) domain - the membrane proton channel (subunits c, a, 8, e, f, g, k and j). These two domains are linked by a central stalk (subunits gamma, delta, and epsilon) rotating inside the F1 region and a stationary peripheral stalk (subunits F6, b, d, and OSCP).

It localises to the mitochondrion membrane. In terms of biological role, subunit 8, of the mitochondrial membrane ATP synthase complex (F(1)F(0) ATP synthase or Complex V) that produces ATP from ADP in the presence of a proton gradient across the membrane which is generated by electron transport complexes of the respiratory chain. ATP synthase complex consist of a soluble F(1) head domain - the catalytic core - and a membrane F(1) domain - the membrane proton channel. These two domains are linked by a central stalk rotating inside the F(1) region and a stationary peripheral stalk. During catalysis, ATP synthesis in the catalytic domain of F(1) is coupled via a rotary mechanism of the central stalk subunits to proton translocation. In vivo, can only synthesize ATP although its ATP hydrolase activity can be activated artificially in vitro. Part of the complex F(0) domain. The sequence is that of ATP synthase F(0) complex subunit 8 from Branchiostoma lanceolatum (Common lancelet).